We begin with the raw amino-acid sequence, 226 residues long: DnaJ homolog subfamily C member 30, mitochondrial (226 aa).

The transit peptide at 1-38 (MAAMRWRWWQRLLPWRLLQARGFPQNSAPSLGLGARTY) directs the protein to the mitochondrion. The 66-residue stretch at 49–114 (ALYDLLGVPS…TLRRKYDRGL (66 aa)) folds into the J domain. The disordered stretch occupies residues 116-157 (SDEDLRGPGVRPSRTPAPDPGSPRTPPPTSRTHDGSRASPGA). Residues 130 to 144 (TPAPDPGSPRTPPPT) are compositionally biased toward pro residues. A helical membrane pass occupies residues 208-225 (DTAAIFLIFSIFIIIGFY).

Associates with the ATP synthase complex. Interacts with MT-ATP6; interaction is direct. Interacts with ATP5MC2; interaction is direct. As to expression, expressed in brain, heart, kidney, liver, lung, spleen, stomach and testis. Highly expressed in the brain. In the neocortex, expressed in most, if not all, glutamatergic excitatory projection neurons (pyramidal) and many interneurons, with the strongest signal noticeably in large pyramidal neurons of layer 3C. Also present in pyramidal neurons of layer 3C PNs of the superior temporal cortex, as well as in pyramidal neurons (Betz cells) of the layer 5B primary motor cortex (at protein level).

It is found in the mitochondrion inner membrane. Functionally, mitochondrial protein enriched in neurons that acts as a regulator of mitochondrial respiration. Associates with the ATP synthase complex and facilitates ATP synthesis. May be a chaperone protein involved in the turnover of the subunits of mitochondrial complex I N-module. It facilitates the degradation of N-module subunits damaged by oxidative stress, and contributes to complex I functional efficiency. The chain is DnaJ homolog subfamily C member 30, mitochondrial from Homo sapiens (Human).